The chain runs to 421 residues: Serine--tRNA ligase (421 aa).

An L-serine-binding site is contributed by 225 to 227; the sequence is TAE. ATP is bound by residues 256 to 258 and V272; that span reads RSE. E279 is an L-serine binding site. 345 to 348 is an ATP binding site; it reads ETHS. Residue T380 participates in L-serine binding.

It belongs to the class-II aminoacyl-tRNA synthetase family. Type-1 seryl-tRNA synthetase subfamily. Homodimer. A single tRNA molecule binds across the dimer.

The protein resides in the cytoplasm. The catalysed reaction is tRNA(Ser) + L-serine + ATP = L-seryl-tRNA(Ser) + AMP + diphosphate + H(+). It catalyses the reaction tRNA(Sec) + L-serine + ATP = L-seryl-tRNA(Sec) + AMP + diphosphate + H(+). Its pathway is aminoacyl-tRNA biosynthesis; selenocysteinyl-tRNA(Sec) biosynthesis; L-seryl-tRNA(Sec) from L-serine and tRNA(Sec): step 1/1. In terms of biological role, catalyzes the attachment of serine to tRNA(Ser). Is also probably able to aminoacylate tRNA(Sec) with serine, to form the misacylated tRNA L-seryl-tRNA(Sec), which will be further converted into selenocysteinyl-tRNA(Sec). This chain is Serine--tRNA ligase (serS), found in Thermus thermophilus (strain ATCC BAA-163 / DSM 7039 / HB27).